The chain runs to 789 residues: uncharacterized protein (789 aa).

Disordered stretches follow at residues 107–326, 426–491, 523–625, 666–751, and 765–789; these read YQQD…NNNN, MLKS…NNNN, SVNF…ISNN, THTF…KGNN, and PTRF…YNQH. A compositionally biased stretch (acidic residues) spans 113–123; the sequence is NNTDDEQEQEQ. Composition is skewed to low complexity over residues 124–141, 151–194, 201–213, and 225–270; these read EQQQ…TPIK, TSQT…ITPI, SIST…LRSS, and TSST…THNS. Residues 274–290 are compositionally biased toward acidic residues; that stretch reads IDDDDGDNNDEINDEND. 2 stretches are compositionally biased toward low complexity: residues 291–326 and 429–491; these read INSN…NNNN and SNNS…NNNN. Positions 523 to 549 are enriched in polar residues; that stretch reads SVNFDRNQNQKSPFLNNTSMPNINFNE. 4 stretches are compositionally biased toward low complexity: residues 550-581, 602-617, 696-722, and 766-789; these read QSQQ…SINY, TSGS…NNSK, HIMN…SGSN, and TRFN…YNQH.

This is an uncharacterized protein from Dictyostelium discoideum (Social amoeba).